A 349-amino-acid chain; its full sequence is Phosphoribosylformylglycinamidine cyclo-ligase (349 aa).

Belongs to the AIR synthase family.

The protein localises to the cytoplasm. The catalysed reaction is 2-formamido-N(1)-(5-O-phospho-beta-D-ribosyl)acetamidine + ATP = 5-amino-1-(5-phospho-beta-D-ribosyl)imidazole + ADP + phosphate + H(+). It participates in purine metabolism; IMP biosynthesis via de novo pathway; 5-amino-1-(5-phospho-D-ribosyl)imidazole from N(2)-formyl-N(1)-(5-phospho-D-ribosyl)glycinamide: step 2/2. This chain is Phosphoribosylformylglycinamidine cyclo-ligase, found in Bordetella parapertussis (strain 12822 / ATCC BAA-587 / NCTC 13253).